A 340-amino-acid chain; its full sequence is Ferredoxin--NADP reductase (340 aa).

FAD contacts are provided by Asp33, Gln41, Tyr46, Ala86, Phe120, Asp286, and Thr327.

It belongs to the ferredoxin--NADP reductase type 2 family. As to quaternary structure, homodimer. Requires FAD as cofactor.

It catalyses the reaction 2 reduced [2Fe-2S]-[ferredoxin] + NADP(+) + H(+) = 2 oxidized [2Fe-2S]-[ferredoxin] + NADPH. This chain is Ferredoxin--NADP reductase, found in Rickettsia rickettsii (strain Sheila Smith).